An 85-amino-acid polypeptide reads, in one-letter code: Neurotoxin 60.35 (85 aa).

The signal sequence occupies residues 1–23 (MKFCVAVSLLIIASMAGVISVSG). The LCN-type CS-alpha/beta domain occupies 24-85 (YDVYPRDYAG…NFLSVIWKQC (62 aa)). 3 disulfide bridges follow: C38–C60, C46–C65, and C50–C67.

It belongs to the long (3 C-C) scorpion toxin superfamily. In terms of tissue distribution, expressed by the venom gland.

It localises to the secreted. This is Neurotoxin 60.35 from Lychas mucronatus (Chinese swimming scorpion).